Here is a 328-residue protein sequence, read N- to C-terminus: Olfactory receptor 2AJ1 (328 aa).

Residues 1–25 (MGHQNHTFSSDFILLGLFSSSPTSV) are Extracellular-facing. Asparagine 5 is a glycosylation site (N-linked (GlcNAc...) asparagine). Residues 26-49 (VFFLVLFVIFIMSVTENTLMILLI) form a helical membrane-spanning segment. Residues 50-57 (RSDSRLHT) are Cytoplasmic-facing. Residues 58-79 (PMYFLLSHLSLMDILHVSNIVP) form a helical membrane-spanning segment. Residues 80–100 (KMVTNFLSGSRTISFAGCGFQ) are Extracellular-facing. A disulfide bridge connects residues cysteine 97 and cysteine 189. Residues 101 to 120 (VFLSLTLLGGECLLLAAMSC) traverse the membrane as a helical segment. At 121–139 (DRYVAICHPLRYPILMKEY) the chain is on the cytoplasmic side. A helical transmembrane segment spans residues 140-158 (ASALMAGGSWLIGVFNSTV). The Extracellular portion of the chain corresponds to 159 to 195 (HTAYALQFPFCGSRAIDHFFCEVPAMLKLSCADTTRY). Residues 196–219 (ERGVCVSAVIFLLIPFSLISASYG) form a helical membrane-spanning segment. Residues 220-236 (QIILTVLQMKSSEARKK) are Cytoplasmic-facing. A helical transmembrane segment spans residues 237 to 259 (SFSTCSFHMIVVTMYYGPFIFTY). At 260–272 (MRPKSYHTPGQDK) the chain is on the extracellular side. A helical transmembrane segment spans residues 273–292 (FLAIFYTILTPTLNPFIYSF). The Cytoplasmic segment spans residues 293–328 (RNKDVLAVMKNMLKSNFLHKKMNRKIPECVFCLFLC).

The protein belongs to the G-protein coupled receptor 1 family.

Its subcellular location is the cell membrane. Its function is as follows. Odorant receptor. This Homo sapiens (Human) protein is Olfactory receptor 2AJ1 (OR2AJ1).